The primary structure comprises 773 residues: Mitochondrial escape protein 2 (773 aa).

A mitochondrion-targeting transit peptide spans 1–29 (MNLFLSRFTGLRNTSFLGHARPFMFPRRY). Over 30-249 (AHSLVAHNIG…FKDWLFSHPR (220 aa)) the chain is Mitochondrial matrix. The 72-residue stretch at 163–234 (RTVDVNFEGP…TEFHMRYRHM (72 aa)) folds into the RRM domain. Residues 250–270 (FTIPLVAAAITVLTASLFDPI) traverse the membrane as a helical segment. The Mitochondrial intermembrane segment spans residues 271–773 (RKFFVETNIV…RLTEALKKID (503 aa)).

This sequence belongs to the YME2 family.

It localises to the mitochondrion inner membrane. In terms of biological role, plays a role in maintaining the mitochondrial genome and in controlling the mtDNA escape. Involved in the regulation of mtDNA nucleotide structure and number. May have a dispensable role in early maturation of pre-rRNA. The protein is Mitochondrial escape protein 2 (yme2) of Schizosaccharomyces pombe (strain 972 / ATCC 24843) (Fission yeast).